The following is a 374-amino-acid chain: MLHFLSMLVLLVQPLGDLGAEMKTLSQRSITNTCTLVLCSPTENGLPGRDGRDGREGPRGEKGDPGLPGPMGLSGLPGPRGPVGPKGENGSAGEPGPKGERGLVGPPGSPGISGPAGKEGPSGKQGNIGPQGKPGPKGEAGPKGEVGAPGMQGSAGAKGPAGPKGERGAPGEQGAPGNAGAAGPAGPAGPQGAPGSRGPPGLKGDRGAPGDRGIKGESGLPDSAALRQQMEALNGKLQRLEAAFSRYKKAALFPDGQSVGDKIFRAANSEEPFEDAKEMCRQAGGQLASPRSATENAAVQQLVTAHSKAAFLSMTDVGTEGKFTYPTGEALVYSNWAPGEPNNNGGAENCVEIFTNGQWNDKACGEQRLVICEF.

An N-terminal signal peptide occupies residues 1-19 (MLHFLSMLVLLVQPLGDLG). Residues cysteine 34 and cysteine 39 each carry the S-nitrosocysteine modification. The tract at residues 40–221 (SPTENGLPGR…RGIKGESGLP (182 aa)) is disordered. Residues 45-221 (GLPGRDGRDG…RGIKGESGLP (177 aa)) enclose the Collagen-like domain. Residues 49–64 (RDGRDGREGPRGEKGD) show a composition bias toward basic and acidic residues. Proline 77 bears the Hydroxyproline mark. Lysine 86 carries the post-translational modification 5-hydroxylysine. N-linked (GlcNAc...) asparagine glycosylation is present at asparagine 89. Proline 95 is subject to Hydroxyproline. Lysine 98 carries the 5-hydroxylysine modification. Residue serine 109 is modified to Phosphoserine. 2 stretches are compositionally biased toward low complexity: residues 137-163 (KGEA…PAGP) and 170-200 (PGEQ…RGPP). Proline 170 and proline 176 each carry hydroxyproline. The span at 203-215 (KGDRGAPGDRGIK) shows a compositional bias: basic and acidic residues. Residues 222 to 253 (DSAALRQQMEALNGKLQRLEAAFSRYKKAALF) adopt a coiled-coil conformation. Positions 259 to 374 (VGDKIFRAAN…GEQRLVICEF (116 aa)) constitute a C-type lectin domain. 2 disulfides stabilise this stretch: cysteine 280/cysteine 372 and cysteine 350/cysteine 364.

Belongs to the SFTPD family. Oligomeric complex of 4 set of homotrimers. Post-translationally, S-nitrosylation at Cys-34 and Cys-39 alters the quaternary structure which results in a pro-inflammatory chemoattractive signaling activity with macrophages.

It localises to the secreted. The protein localises to the extracellular space. Its subcellular location is the extracellular matrix. It is found in the surface film. In terms of biological role, contributes to the lung's defense against inhaled microorganisms, organic antigens and toxins. Interacts with compounds such as bacterial lipopolysaccharides, oligosaccharides and fatty acids and modulates leukocyte action in immune response. May participate in the extracellular reorganization or turnover of pulmonary surfactant. Binds strongly maltose residues and to a lesser extent other alpha-glucosyl moieties. This chain is Pulmonary surfactant-associated protein D (Sftpd), found in Rattus norvegicus (Rat).